We begin with the raw amino-acid sequence, 137 residues long: Nucleoside diphosphate kinase (137 aa).

ATP-binding residues include K10, F58, R86, T92, R103, and N113. Catalysis depends on H116, which acts as the Pros-phosphohistidine intermediate.

This sequence belongs to the NDK family. In terms of assembly, homotetramer. Mg(2+) serves as cofactor.

It is found in the cytoplasm. The enzyme catalyses a 2'-deoxyribonucleoside 5'-diphosphate + ATP = a 2'-deoxyribonucleoside 5'-triphosphate + ADP. It catalyses the reaction a ribonucleoside 5'-diphosphate + ATP = a ribonucleoside 5'-triphosphate + ADP. Its function is as follows. Major role in the synthesis of nucleoside triphosphates other than ATP. The ATP gamma phosphate is transferred to the NDP beta phosphate via a ping-pong mechanism, using a phosphorylated active-site intermediate. The polypeptide is Nucleoside diphosphate kinase (Helicobacter pylori (strain ATCC 700392 / 26695) (Campylobacter pylori)).